A 332-amino-acid chain; its full sequence is Acetyl-coenzyme A carboxylase carboxyl transferase subunit beta (332 aa).

In terms of domain architecture, CoA carboxyltransferase N-terminal spans 24-293 (LWIKCPDSGH…PEVIVESEPE (270 aa)). The segment at 288–332 (VESEPEPEPEPVVAEIIPPTSDLPVSAPAPAPVAAQTPAPAAPSA) is disordered. Low complexity predominate over residues 298 to 332 (PVVAEIIPPTSDLPVSAPAPAPVAAQTPAPAAPSA).

Belongs to the AccD/PCCB family. Acetyl-CoA carboxylase is a heterohexamer composed of biotin carboxyl carrier protein (AccB), biotin carboxylase (AccC) and two subunits each of ACCase subunit alpha (AccA) and ACCase subunit beta (AccD).

The protein resides in the cytoplasm. The catalysed reaction is N(6)-carboxybiotinyl-L-lysyl-[protein] + acetyl-CoA = N(6)-biotinyl-L-lysyl-[protein] + malonyl-CoA. Its pathway is lipid metabolism; malonyl-CoA biosynthesis; malonyl-CoA from acetyl-CoA: step 1/1. Component of the acetyl coenzyme A carboxylase (ACC) complex. Biotin carboxylase (BC) catalyzes the carboxylation of biotin on its carrier protein (BCCP) and then the CO(2) group is transferred by the transcarboxylase to acetyl-CoA to form malonyl-CoA. This chain is Acetyl-coenzyme A carboxylase carboxyl transferase subunit beta, found in Rhodopseudomonas palustris (strain BisB18).